We begin with the raw amino-acid sequence, 178 residues long: Putative RING-H2 finger protein ATL19 (178 aa).

The helical transmembrane segment at 11 to 31 (LISVLGLAVFIGLCILLVVLI) threads the bilayer. Residues 130–172 (CAICLSGYVVNEECRVFPVCRHIYHALCIDAWLKNHLTCPTCR) form an RING-type; atypical zinc finger.

It belongs to the RING-type zinc finger family. ATL subfamily.

It is found in the membrane. The enzyme catalyses S-ubiquitinyl-[E2 ubiquitin-conjugating enzyme]-L-cysteine + [acceptor protein]-L-lysine = [E2 ubiquitin-conjugating enzyme]-L-cysteine + N(6)-ubiquitinyl-[acceptor protein]-L-lysine.. It participates in protein modification; protein ubiquitination. The sequence is that of Putative RING-H2 finger protein ATL19 (ATL19) from Arabidopsis thaliana (Mouse-ear cress).